Consider the following 409-residue polypeptide: Coagulation factor IX (409 aa).

Ca(2+)-binding residues include Y1, N2, E7, E8, E16, E18, E21, E22, E27, E28, and E31. The Gla domain occupies 1–47 (YNSGKLEESFVRGNLERECIEEKCSFEEAREVFENTEKTNEFWKQYV). 4-carboxyglutamate is present on residues E7, E8, E16, E18, E21, E22, E27, E28, E31, E34, E37, and E41. Position 16 (E16) interacts with Mg(2+). C19 and C24 are joined by a disulfide. E21 is a binding site for Mg(2+). E27 is a Mg(2+) binding site. E31 provides a ligand contact to Mg(2+). Residues E37, E41, D48, G49, and Q51 each coordinate Ca(2+). Residues E37 and E41 each contribute to the Mg(2+) site. The EGF-like 1; calcium-binding domain maps to 48-84 (DGDQCEPNPCLNGGLCKDDINSYECWCQVGFEGKNCE). 10 disulfide bridges follow: C52–C63, C57–C72, C74–C83, C89–C100, C96–C110, C112–C125, C133–C291, C208–C224, C338–C352, and C363–C391. 2 residues coordinate Ca(2+): D65 and D66. Residue D65 is modified to (3R)-3-hydroxyaspartate. The residue at position 69 (S69) is a Phosphoserine. An EGF-like 2 domain is found at 85–126 (LDATCNIKNGRCKQFCKTGADSKVLCSCTTGYRLAPDQKSCK). A propeptide spans 148–182 (AEIIFSNMDYENSTEVEPILDSLTESNQSSDDFIR) (activation peptide). A Sulfotyrosine modification is found at Y157. S160 bears the Phosphoserine mark. T161 carries the phosphothreonine; alternate modification. Residue T161 is glycosylated (O-linked (GalNAc...) threonine; alternate). O-linked (GalNAc...) threonine glycosylation occurs at T171. The N-linked (GlcNAc...) asparagine glycan is linked to N174. In terms of domain architecture, Peptidase S1 spans 183-409 (IVGGENAKPG…YTKVSRYVNW (227 aa)). The active-site Charge relay system is H223. The Ca(2+) site is built by E237, N239, E242, E244, and E247. N262 carries N-linked (GlcNAc...) asparagine glycosylation. D271 serves as the catalytic Charge relay system. S367 serves as the catalytic Charge relay system.

This sequence belongs to the peptidase S1 family. In terms of assembly, heterodimer of a light chain and a heavy chain; disulfide-linked. Interacts (inactive and activated) with F11 (activated) in calcium-dependent manner. Interacts with SERPINC1. Post-translationally, activated by factor XIa, which excises the activation peptide. The propeptide can also be removed by snake venom protease. Activated by coagulation factor VIIa-tissue factor (F7-F3) complex in calcium-dependent manner. The iron and 2-oxoglutarate dependent 3-hydroxylation of aspartate and asparagine is (R) stereospecific within EGF domains.

It is found in the secreted. It catalyses the reaction Selective cleavage of Arg-|-Ile bond in factor X to form factor Xa.. Its function is as follows. Factor IX is a vitamin K-dependent plasma protein that participates in the intrinsic pathway of blood coagulation by converting factor X to its active form in the presence of Ca(2+) ions, phospholipids, and factor VIIIa. This is Coagulation factor IX (F9) from Sus scrofa (Pig).